We begin with the raw amino-acid sequence, 80 residues long: MPKKNEAPASFEKALSELEQIVTRLESGDLPLEEALNEFERGVQLARQGQDKLQQAEQRVQILLSDNEDASLTPFTPDNE.

The protein belongs to the XseB family. As to quaternary structure, heterooligomer composed of large and small subunits.

Its subcellular location is the cytoplasm. The catalysed reaction is Exonucleolytic cleavage in either 5'- to 3'- or 3'- to 5'-direction to yield nucleoside 5'-phosphates.. Its function is as follows. Bidirectionally degrades single-stranded DNA into large acid-insoluble oligonucleotides, which are then degraded further into small acid-soluble oligonucleotides. This is Exodeoxyribonuclease 7 small subunit from Escherichia coli (strain SE11).